Reading from the N-terminus, the 188-residue chain is Heparin-binding hemagglutinin homolog (188 aa).

A disordered region spans residues 162-188 (KAAAPARKAPAKKAPAKKAPAKKVTQK). The segment covering 170–188 (APAKKAPAKKAPAKKVTQK) has biased composition (basic residues).

It to M.tuberculosis HbhA.

Functionally, might mediate adherence to host cells by binding sulfated glycoconjugates. In Mycobacterium leprae (strain TN), this protein is Heparin-binding hemagglutinin homolog (hbhA).